The chain runs to 586 residues: CTP synthase (586 aa).

The tract at residues 1 to 278 (MRKHPQTATK…DAFVVRRLNL (278 aa)) is amidoligase domain. Ser20 provides a ligand contact to CTP. Ser20 lines the UTP pocket. Residues 21 to 26 (SLGKGL) and Asp78 each bind ATP. Positions 78 and 152 each coordinate Mg(2+). Residues 159–161 (DIE), 199–204 (KTKPTQ), and Lys235 contribute to the CTP site. UTP contacts are provided by residues 199-204 (KTKPTQ) and Lys235. Residues 303–551 (RIALVGKYVE…VGAAIDYKAG (249 aa)) enclose the Glutamine amidotransferase type-1 domain. L-glutamine is bound at residue Gly366. Residue Cys393 is the Nucleophile; for glutamine hydrolysis of the active site. L-glutamine is bound by residues 394-397 (LGLQ), Glu416, and Arg477. Residues His524 and Glu526 contribute to the active site. A disordered region spans residues 560 to 586 (EIPEHTPNGSSHRDGVGQPLPEPASRG).

It belongs to the CTP synthase family. Homotetramer.

The catalysed reaction is UTP + L-glutamine + ATP + H2O = CTP + L-glutamate + ADP + phosphate + 2 H(+). It catalyses the reaction L-glutamine + H2O = L-glutamate + NH4(+). It carries out the reaction UTP + NH4(+) + ATP = CTP + ADP + phosphate + 2 H(+). Its pathway is pyrimidine metabolism; CTP biosynthesis via de novo pathway; CTP from UDP: step 2/2. Its activity is regulated as follows. Allosterically activated by GTP, when glutamine is the substrate; GTP has no effect on the reaction when ammonia is the substrate. The allosteric effector GTP functions by stabilizing the protein conformation that binds the tetrahedral intermediate(s) formed during glutamine hydrolysis. Inhibited by the product CTP, via allosteric rather than competitive inhibition. Functionally, catalyzes the ATP-dependent amination of UTP to CTP with either L-glutamine or ammonia as the source of nitrogen. Regulates intracellular CTP levels through interactions with the four ribonucleotide triphosphates. The sequence is that of CTP synthase from Mycobacterium tuberculosis (strain CDC 1551 / Oshkosh).